The chain runs to 360 residues: Phosphate acyltransferase (360 aa).

Belongs to the PlsX family. As to quaternary structure, homodimer. Probably interacts with PlsY.

It is found in the cytoplasm. The enzyme catalyses a fatty acyl-[ACP] + phosphate = an acyl phosphate + holo-[ACP]. It functions in the pathway lipid metabolism; phospholipid metabolism. In terms of biological role, catalyzes the reversible formation of acyl-phosphate (acyl-PO(4)) from acyl-[acyl-carrier-protein] (acyl-ACP). This enzyme utilizes acyl-ACP as fatty acyl donor, but not acyl-CoA. This chain is Phosphate acyltransferase, found in Janthinobacterium sp. (strain Marseille) (Minibacterium massiliensis).